A 66-amino-acid chain; its full sequence is Large ribosomal subunit protein bL33c (66 aa).

It belongs to the bacterial ribosomal protein bL33 family.

The protein localises to the plastid. Its subcellular location is the chloroplast. The chain is Large ribosomal subunit protein bL33c from Coffea arabica (Arabian coffee).